A 146-amino-acid polypeptide reads, in one-letter code: Acidic phospholipase A2 S13-69J (146 aa).

Positions 1–19 are cleaved as a signal peptide; that stretch reads MYPAHLLVLLAVCVSLLGA. The propeptide occupies 20 to 27; the sequence is ASIPPQPL. 7 disulfide bridges follow: cysteine 38/cysteine 98, cysteine 54/cysteine 145, cysteine 56/cysteine 72, cysteine 71/cysteine 126, cysteine 78/cysteine 119, cysteine 87/cysteine 112, and cysteine 105/cysteine 117. 3 residues coordinate Ca(2+): tyrosine 55, glycine 57, and glycine 59. Histidine 75 is a catalytic residue. A Ca(2+)-binding site is contributed by aspartate 76. Aspartate 120 is a catalytic residue.

The protein belongs to the phospholipase A2 family. Group I subfamily. D49 sub-subfamily. Requires Ca(2+) as cofactor. As to expression, expressed by the venom gland.

It localises to the secreted. It catalyses the reaction a 1,2-diacyl-sn-glycero-3-phosphocholine + H2O = a 1-acyl-sn-glycero-3-phosphocholine + a fatty acid + H(+). Functionally, snake venom phospholipase A2 (PLA2) that inhibits collagen-induced platelet aggregation. PLA2 catalyzes the calcium-dependent hydrolysis of the 2-acyl groups in 3-sn-phosphoglycerides. The sequence is that of Acidic phospholipase A2 S13-69J from Austrelaps superbus (Lowland copperhead snake).